Consider the following 380-residue polypeptide: Lipid-A-disaccharide synthase (380 aa).

This sequence belongs to the LpxB family.

The enzyme catalyses a lipid X + a UDP-2-N,3-O-bis[(3R)-3-hydroxyacyl]-alpha-D-glucosamine = a lipid A disaccharide + UDP + H(+). The protein operates within bacterial outer membrane biogenesis; LPS lipid A biosynthesis. In terms of biological role, condensation of UDP-2,3-diacylglucosamine and 2,3-diacylglucosamine-1-phosphate to form lipid A disaccharide, a precursor of lipid A, a phosphorylated glycolipid that anchors the lipopolysaccharide to the outer membrane of the cell. This Francisella tularensis subsp. novicida (strain U112) protein is Lipid-A-disaccharide synthase.